Here is a 1517-residue protein sequence, read N- to C-terminus: DNA-directed RNA polymerase subunit beta' (1517 aa).

Positions 71, 73, 86, and 89 each coordinate Zn(2+). The Mg(2+) site is built by aspartate 482, aspartate 484, and aspartate 486. Zn(2+) is bound by residues cysteine 812, cysteine 886, cysteine 893, and cysteine 896.

Belongs to the RNA polymerase beta' chain family. As to quaternary structure, the RNAP catalytic core consists of 2 alpha, 1 beta, 1 beta' and 1 omega subunit. When a sigma factor is associated with the core the holoenzyme is formed, which can initiate transcription. Requires Mg(2+) as cofactor. Zn(2+) is required as a cofactor.

It catalyses the reaction RNA(n) + a ribonucleoside 5'-triphosphate = RNA(n+1) + diphosphate. In terms of biological role, DNA-dependent RNA polymerase catalyzes the transcription of DNA into RNA using the four ribonucleoside triphosphates as substrates. The sequence is that of DNA-directed RNA polymerase subunit beta' from Campylobacter jejuni subsp. jejuni serotype O:2 (strain ATCC 700819 / NCTC 11168).